We begin with the raw amino-acid sequence, 326 residues long: Glycerol-3-phosphate dehydrogenase [NAD(P)+] (326 aa).

NADPH contacts are provided by Trp16, Arg36, Arg37, and Lys106. Sn-glycerol 3-phosphate contacts are provided by Lys106 and Gly132. Ala136 is an NADPH binding site. 5 residues coordinate sn-glycerol 3-phosphate: Lys187, Asp240, Ser250, Arg251, and Asn252. Lys187 functions as the Proton acceptor in the catalytic mechanism. Arg251 lines the NADPH pocket. The NADPH site is built by Val271 and Glu273.

The protein belongs to the NAD-dependent glycerol-3-phosphate dehydrogenase family.

It is found in the cytoplasm. The enzyme catalyses sn-glycerol 3-phosphate + NAD(+) = dihydroxyacetone phosphate + NADH + H(+). It catalyses the reaction sn-glycerol 3-phosphate + NADP(+) = dihydroxyacetone phosphate + NADPH + H(+). The protein operates within membrane lipid metabolism; glycerophospholipid metabolism. Catalyzes the reduction of the glycolytic intermediate dihydroxyacetone phosphate (DHAP) to sn-glycerol 3-phosphate (G3P), the key precursor for phospholipid synthesis. This Deinococcus geothermalis (strain DSM 11300 / CIP 105573 / AG-3a) protein is Glycerol-3-phosphate dehydrogenase [NAD(P)+].